We begin with the raw amino-acid sequence, 370 residues long: Aminomethyltransferase (370 aa).

The protein belongs to the GcvT family. As to quaternary structure, the glycine cleavage system is composed of four proteins: P, T, L and H.

It carries out the reaction N(6)-[(R)-S(8)-aminomethyldihydrolipoyl]-L-lysyl-[protein] + (6S)-5,6,7,8-tetrahydrofolate = N(6)-[(R)-dihydrolipoyl]-L-lysyl-[protein] + (6R)-5,10-methylene-5,6,7,8-tetrahydrofolate + NH4(+). In terms of biological role, the glycine cleavage system catalyzes the degradation of glycine. The protein is Aminomethyltransferase of Stenotrophomonas maltophilia (strain K279a).